Reading from the N-terminus, the 185-residue chain is Elongation factor P 1 (185 aa).

Belongs to the elongation factor P family.

It localises to the cytoplasm. The protein operates within protein biosynthesis; polypeptide chain elongation. In terms of biological role, involved in peptide bond synthesis. Stimulates efficient translation and peptide-bond synthesis on native or reconstituted 70S ribosomes in vitro. Probably functions indirectly by altering the affinity of the ribosome for aminoacyl-tRNA, thus increasing their reactivity as acceptors for peptidyl transferase. The chain is Elongation factor P 1 (efp1) from Chlamydia trachomatis serovar D (strain ATCC VR-885 / DSM 19411 / UW-3/Cx).